Consider the following 116-residue polypeptide: Large ribosomal subunit protein bL20 (116 aa).

It belongs to the bacterial ribosomal protein bL20 family.

Binds directly to 23S ribosomal RNA and is necessary for the in vitro assembly process of the 50S ribosomal subunit. It is not involved in the protein synthesizing functions of that subunit. The polypeptide is Large ribosomal subunit protein bL20 (Mycoplasmopsis synoviae (strain 53) (Mycoplasma synoviae)).